The sequence spans 335 residues: Cathepsin B (335 aa).

Positions 1 to 17 (MWRLLATLSCLVLLTSA) are cleaved as a signal peptide. Positions 18-79 (RESLHFQPLS…QRAAFAADMI (62 aa)) are cleaved as a propeptide — activation peptide. Cystine bridges form between Cys-93-Cys-122, Cys-105-Cys-150, Cys-141-Cys-207, Cys-142-Cys-146, Cys-179-Cys-211, and Cys-187-Cys-198. Residue Cys-108 is part of the active site. An N-linked (GlcNAc...) asparagine glycan is attached at Asn-192. Position 220 is an N6-acetyllysine (Lys-220). Cys-227 and Cys-331 are oxidised to a cystine. Active-site residues include His-278 and Asn-298. Positions 333-335 (PHF) are excised as a propeptide.

The protein belongs to the peptidase C1 family. Dimer of a heavy chain and a light chain cross-linked by a disulfide bond. Interacts with SRPX2. Directly interacts with SHKBP1. As to expression, expressed in heart (at protein level).

It localises to the lysosome. The protein localises to the melanosome. It is found in the secreted. Its subcellular location is the extracellular space. The protein resides in the apical cell membrane. The catalysed reaction is Hydrolysis of proteins with broad specificity for peptide bonds. Preferentially cleaves -Arg-Arg-|-Xaa bonds in small molecule substrates (thus differing from cathepsin L). In addition to being an endopeptidase, shows peptidyl-dipeptidase activity, liberating C-terminal dipeptides.. Thiol protease which is believed to participate in intracellular degradation and turnover of proteins. Cleaves matrix extracellular phosphoglycoprotein MEPE. Involved in the solubilization of cross-linked TG/thyroglobulin in the thyroid follicle lumen. Has also been implicated in tumor invasion and metastasis. This Sus scrofa (Pig) protein is Cathepsin B (CTSB).